The sequence spans 455 residues: UDP-glycosyltransferase 79B2 (455 aa).

UDP-alpha-D-glucose contacts are provided by residues S266, 325 to 327 (VQQ), 342 to 350 (HCGFGSMWE), and 364 to 367 (LGDQ).

It belongs to the UDP-glycosyltransferase family.

The polypeptide is UDP-glycosyltransferase 79B2 (UGT79B2) (Arabidopsis thaliana (Mouse-ear cress)).